A 501-amino-acid chain; its full sequence is ATP synthase subunit alpha (501 aa).

169-176 (GDRQTGKT) is an ATP binding site.

The protein belongs to the ATPase alpha/beta chains family. As to quaternary structure, F-type ATPases have 2 components, CF(1) - the catalytic core - and CF(0) - the membrane proton channel. CF(1) has five subunits: alpha(3), beta(3), gamma(1), delta(1), epsilon(1). CF(0) has three main subunits: a(1), b(2) and c(9-12). The alpha and beta chains form an alternating ring which encloses part of the gamma chain. CF(1) is attached to CF(0) by a central stalk formed by the gamma and epsilon chains, while a peripheral stalk is formed by the delta and b chains.

Its subcellular location is the cell inner membrane. It catalyses the reaction ATP + H2O + 4 H(+)(in) = ADP + phosphate + 5 H(+)(out). In terms of biological role, produces ATP from ADP in the presence of a proton gradient across the membrane. The alpha chain is a regulatory subunit. In Campylobacter jejuni subsp. jejuni serotype O:23/36 (strain 81-176), this protein is ATP synthase subunit alpha.